A 326-amino-acid chain; its full sequence is Peroxidase 6 (326 aa).

The N-terminal stretch at 1-20 is a signal peptide; sequence MKSFGLCLFILVSSPCLLQA. N-linked (GlcNAc...) asparagine glycosylation occurs at Asn-21. 4 cysteine pairs are disulfide-bonded: Cys-31/Cys-112, Cys-64/Cys-69, Cys-118/Cys-318, and Cys-197/Cys-228. His-62 serves as the catalytic Proton acceptor. Residues Asp-63, Val-66, Gly-68, Asp-70, and Ser-72 each contribute to the Ca(2+) site. Asn-163 carries N-linked (GlcNAc...) asparagine glycosylation. Position 190 (His-190) interacts with heme b. Thr-191 contacts Ca(2+). Residues Asn-206 and Asn-230 are each glycosylated (N-linked (GlcNAc...) asparagine). 3 residues coordinate Ca(2+): Asp-242, Thr-245, and Asp-250. Asn-274 is a glycosylation site (N-linked (GlcNAc...) asparagine).

Belongs to the peroxidase family. Classical plant (class III) peroxidase subfamily. The cofactor is heme b. Ca(2+) is required as a cofactor.

It localises to the secreted. It carries out the reaction 2 a phenolic donor + H2O2 = 2 a phenolic radical donor + 2 H2O. Removal of H(2)O(2), oxidation of toxic reductants, biosynthesis and degradation of lignin, suberization, auxin catabolism, response to environmental stresses such as wounding, pathogen attack and oxidative stress. These functions might be dependent on each isozyme/isoform in each plant tissue. This is Peroxidase 6 (PER6) from Arabidopsis thaliana (Mouse-ear cress).